We begin with the raw amino-acid sequence, 932 residues long: Isoleucine--tRNA ligase (932 aa).

A 'HIGH' region motif is present at residues 57 to 67 (PYANGDIHMGH). E556 lines the L-isoleucyl-5'-AMP pocket. Residues 597 to 601 (KMSKS) carry the 'KMSKS' region motif. K600 serves as a coordination point for ATP. 4 residues coordinate Zn(2+): C891, C894, C911, and C914.

Belongs to the class-I aminoacyl-tRNA synthetase family. IleS type 1 subfamily. As to quaternary structure, monomer. Requires Zn(2+) as cofactor.

It is found in the cytoplasm. It catalyses the reaction tRNA(Ile) + L-isoleucine + ATP = L-isoleucyl-tRNA(Ile) + AMP + diphosphate. Functionally, catalyzes the attachment of isoleucine to tRNA(Ile). As IleRS can inadvertently accommodate and process structurally similar amino acids such as valine, to avoid such errors it has two additional distinct tRNA(Ile)-dependent editing activities. One activity is designated as 'pretransfer' editing and involves the hydrolysis of activated Val-AMP. The other activity is designated 'posttransfer' editing and involves deacylation of mischarged Val-tRNA(Ile). This chain is Isoleucine--tRNA ligase, found in Lactiplantibacillus plantarum (strain ATCC BAA-793 / NCIMB 8826 / WCFS1) (Lactobacillus plantarum).